Consider the following 673-residue polypeptide: DNA ligase (673 aa).

NAD(+) contacts are provided by residues 38–42, 87–88, and Glu119; these read DSVYD and SL. Catalysis depends on Lys121, which acts as the N6-AMP-lysine intermediate. Residues Arg142, Glu179, Lys296, and Lys320 each coordinate NAD(+). Residues Cys414, Cys417, Cys432, and Cys438 each coordinate Zn(2+). A BRCT domain is found at 595–673; it reads VVKSEIAGKT…EEAFLKLLKS (79 aa).

It belongs to the NAD-dependent DNA ligase family. LigA subfamily. Mg(2+) is required as a cofactor. The cofactor is Mn(2+).

It carries out the reaction NAD(+) + (deoxyribonucleotide)n-3'-hydroxyl + 5'-phospho-(deoxyribonucleotide)m = (deoxyribonucleotide)n+m + AMP + beta-nicotinamide D-nucleotide.. DNA ligase that catalyzes the formation of phosphodiester linkages between 5'-phosphoryl and 3'-hydroxyl groups in double-stranded DNA using NAD as a coenzyme and as the energy source for the reaction. It is essential for DNA replication and repair of damaged DNA. The protein is DNA ligase of Coxiella burnetii (strain RSA 493 / Nine Mile phase I).